A 428-amino-acid polypeptide reads, in one-letter code: Phosphomethylpyrimidine synthase 2 (428 aa).

Residues Asn65, Met94, Tyr123, His158, 180–182, 221–224, and Glu260 each bind substrate; these read SRG and DGMR. Zn(2+) is bound at residue His264. Tyr287 lines the substrate pocket. His328 is a binding site for Zn(2+). The [4Fe-4S] cluster site is built by Cys405, Cys408, and Cys412.

The protein belongs to the ThiC family. [4Fe-4S] cluster serves as cofactor.

The enzyme catalyses 5-amino-1-(5-phospho-beta-D-ribosyl)imidazole + S-adenosyl-L-methionine = 4-amino-2-methyl-5-(phosphooxymethyl)pyrimidine + CO + 5'-deoxyadenosine + formate + L-methionine + 3 H(+). Its pathway is cofactor biosynthesis; thiamine diphosphate biosynthesis. Its function is as follows. Catalyzes the synthesis of the hydroxymethylpyrimidine phosphate (HMP-P) moiety of thiamine from aminoimidazole ribotide (AIR) in a radical S-adenosyl-L-methionine (SAM)-dependent reaction. This Methanosarcina barkeri (strain Fusaro / DSM 804) protein is Phosphomethylpyrimidine synthase 2.